The following is a 382-amino-acid chain: Mannitol-1-phosphate 5-dehydrogenase (382 aa).

3–14 lines the NAD(+) pocket; it reads ALHFGAGNIGRG. Lys269 bears the N6-acetyllysine mark.

Belongs to the mannitol dehydrogenase family.

It catalyses the reaction D-mannitol 1-phosphate + NAD(+) = beta-D-fructose 6-phosphate + NADH + H(+). The protein is Mannitol-1-phosphate 5-dehydrogenase of Escherichia coli (strain ATCC 8739 / DSM 1576 / NBRC 3972 / NCIMB 8545 / WDCM 00012 / Crooks).